Reading from the N-terminus, the 417-residue chain is MFPRDVRIESYDPELAKAIAAETQRQEDHVELIASENYTSPAVMEAQGSQLTNKYAEGYPGKRYYGGCEYVDIAEQLAIDRLKQLFGADYANVQPHSGSQANQAVYFALLQPGDTILGMSLAHGGHLTHGAKVNASGKLFNAVQYGVNDQGLIDYDEVERLALEHKPKMVVAGFSAYSQVIDWARFRAIADKVGAYLFVDMAHVAGLVAAGVYPSPLEHAHVVTSTTHKTLRGPRGGIIVAKGADEDLVKKLQSIVFPGIQGGPLMHVIAGKAVAFKEALEPGFKAYQQQVVKNAQAMANTLIERGYKIVSGGTQNHLMLVDMIGKDVSGKDAEAALGKAHITVNKNSVPNDPRSPFVTSGLRLGTPAVTTRGYVEQDCVDLANWIADVLDAPNDDAVIARVRDAVSAQCRKYPVYG.

Residues leucine 121 and 125-127 each bind (6S)-5,6,7,8-tetrahydrofolate; that span reads GHL. Residue lysine 229 is modified to N6-(pyridoxal phosphate)lysine. Residue 355 to 357 coordinates (6S)-5,6,7,8-tetrahydrofolate; the sequence is SPF.

It belongs to the SHMT family. Homodimer. Pyridoxal 5'-phosphate is required as a cofactor.

Its subcellular location is the cytoplasm. The catalysed reaction is (6R)-5,10-methylene-5,6,7,8-tetrahydrofolate + glycine + H2O = (6S)-5,6,7,8-tetrahydrofolate + L-serine. The protein operates within one-carbon metabolism; tetrahydrofolate interconversion. Its pathway is amino-acid biosynthesis; glycine biosynthesis; glycine from L-serine: step 1/1. Functionally, catalyzes the reversible interconversion of serine and glycine with tetrahydrofolate (THF) serving as the one-carbon carrier. This reaction serves as the major source of one-carbon groups required for the biosynthesis of purines, thymidylate, methionine, and other important biomolecules. Also exhibits THF-independent aldolase activity toward beta-hydroxyamino acids, producing glycine and aldehydes, via a retro-aldol mechanism. The sequence is that of Serine hydroxymethyltransferase from Stenotrophomonas maltophilia (strain K279a).